A 199-amino-acid polypeptide reads, in one-letter code: Large ribosomal subunit protein bL25 (199 aa).

This sequence belongs to the bacterial ribosomal protein bL25 family. CTC subfamily. Part of the 50S ribosomal subunit; part of the 5S rRNA/L5/L18/L25 subcomplex. Contacts the 5S rRNA. Binds to the 5S rRNA independently of L5 and L18.

This is one of the proteins that binds to the 5S RNA in the ribosome where it forms part of the central protuberance. The polypeptide is Large ribosomal subunit protein bL25 (Chlorobaculum tepidum (strain ATCC 49652 / DSM 12025 / NBRC 103806 / TLS) (Chlorobium tepidum)).